The primary structure comprises 447 residues: Cytochrome P450 BJ-4 (447 aa).

Position 392 (Cys-392) interacts with heme.

It belongs to the cytochrome P450 family. Requires heme as cofactor.

In terms of biological role, cytochromes P450 are a group of heme-thiolate monooxygenases. They oxidize a variety of structurally unrelated compounds, including steroids, fatty acids, and xenobiotics. This is Cytochrome P450 BJ-4 (cyp117) from Bradyrhizobium diazoefficiens (strain JCM 10833 / BCRC 13528 / IAM 13628 / NBRC 14792 / USDA 110).